The following is a 267-amino-acid chain: Actin maturation protease (267 aa).

The segment at 1-32 (MSNISSVAPPPPPPPMIVTPSTPATTKERPVG) is disordered. The segment covering 8–17 (APPPPPPPMI) has biased composition (pro residues). The tract at residues 74-188 (SIVQVGPTCG…WALIVGYLVD (115 aa)) is peptidase C39-like. The active site involves Cys-82.

This sequence belongs to the ACTMAP family.

It catalyses the reaction N-terminal N(alpha)-acetyl-L-cysteinyl-L-aspartyl-[protein] + H2O = N-terminal L-aspartyl-[protein] + N-acetyl-L-cysteine. In terms of biological role, actin maturation protease that specifically mediates the cleavage of immature acetylated N-terminal actin, thereby contributing to actin maturation. This chain is Actin maturation protease, found in Drosophila melanogaster (Fruit fly).